The primary structure comprises 223 residues: Ribonuclease HII (223 aa).

The 192-residue stretch at 32–223 folds into the RNase H type-2 domain; that stretch reads FHIAGVDEVG…LKGRFRDNMS (192 aa). Residues aspartate 38, glutamate 39, and aspartate 130 each coordinate a divalent metal cation.

The protein belongs to the RNase HII family. Mn(2+) is required as a cofactor. Mg(2+) serves as cofactor.

It localises to the cytoplasm. It catalyses the reaction Endonucleolytic cleavage to 5'-phosphomonoester.. Functionally, endonuclease that specifically degrades the RNA of RNA-DNA hybrids. The sequence is that of Ribonuclease HII from Bartonella quintana (strain Toulouse) (Rochalimaea quintana).